Here is a 921-residue protein sequence, read N- to C-terminus: Isoleucine--tRNA ligase (921 aa).

Positions 57–67 (PYANGDIHMGH) match the 'HIGH' region motif. Glu552 is a binding site for L-isoleucyl-5'-AMP. The short motif at 593 to 597 (KMSKS) is the 'KMSKS' region element. Lys596 is an ATP binding site. Zn(2+)-binding residues include Cys888, Cys891, Cys908, and Cys911.

Belongs to the class-I aminoacyl-tRNA synthetase family. IleS type 1 subfamily. In terms of assembly, monomer. It depends on Zn(2+) as a cofactor.

It localises to the cytoplasm. The enzyme catalyses tRNA(Ile) + L-isoleucine + ATP = L-isoleucyl-tRNA(Ile) + AMP + diphosphate. In terms of biological role, catalyzes the attachment of isoleucine to tRNA(Ile). As IleRS can inadvertently accommodate and process structurally similar amino acids such as valine, to avoid such errors it has two additional distinct tRNA(Ile)-dependent editing activities. One activity is designated as 'pretransfer' editing and involves the hydrolysis of activated Val-AMP. The other activity is designated 'posttransfer' editing and involves deacylation of mischarged Val-tRNA(Ile). The sequence is that of Isoleucine--tRNA ligase from Bacillus anthracis (strain A0248).